The chain runs to 153 residues: Deoxyuridine 5'-triphosphate nucleotidohydrolase (153 aa).

Residues 71–73, N84, 88–90, and K98 contribute to the substrate site; these read RSG and TID.

It belongs to the dUTPase family. Requires Mg(2+) as cofactor.

The catalysed reaction is dUTP + H2O = dUMP + diphosphate + H(+). It participates in pyrimidine metabolism; dUMP biosynthesis; dUMP from dCTP (dUTP route): step 2/2. This enzyme is involved in nucleotide metabolism: it produces dUMP, the immediate precursor of thymidine nucleotides and it decreases the intracellular concentration of dUTP so that uracil cannot be incorporated into DNA. This chain is Deoxyuridine 5'-triphosphate nucleotidohydrolase, found in Wolbachia pipientis subsp. Culex pipiens (strain wPip).